Here is a 148-residue protein sequence, read N- to C-terminus: Large ribosomal subunit protein uL15 (148 aa).

The span at 1-40 shows a compositional bias: basic and acidic residues; it reads MADILQMHDLKPAPGANKDRIRVGRGEGSKGKTSGRGDKG. The interval 1 to 47 is disordered; sequence MADILQMHDLKPAPGANKDRIRVGRGEGSKGKTSGRGDKGTKKRYQV.

The protein belongs to the universal ribosomal protein uL15 family. As to quaternary structure, part of the 50S ribosomal subunit.

Functionally, binds to the 23S rRNA. In Bifidobacterium adolescentis (strain ATCC 15703 / DSM 20083 / NCTC 11814 / E194a), this protein is Large ribosomal subunit protein uL15.